Reading from the N-terminus, the 382-residue chain is Secreted RxLR effector protein 118 (382 aa).

A signal peptide spans 1–21; that stretch reads MRGAYYVTIALLVVASSQISA. Positions 48 to 65 match the RxLR-dEER motif; sequence RSLRGSRDVSNDVAIEER. Positions 308 to 382 are disordered; it reads MNKASTSKGK…AVTSLSSISN (75 aa). Residues 310 to 323 are compositionally biased toward polar residues; that stretch reads KASTSKGKSSVFTR.

The protein belongs to the RxLR effector family.

It localises to the secreted. The protein localises to the host nucleus. Secreted effector that completely suppresses the host cell death induced by cell death-inducing proteins. This is Secreted RxLR effector protein 118 from Plasmopara viticola (Downy mildew of grapevine).